The sequence spans 92 residues: N(2)-fixation sustaining protein CowN (92 aa).

It belongs to the CowN family.

Its function is as follows. Is required to sustain N(2)-dependent growth in the presence of low levels of carbon monoxide (CO). Probably acts by protecting the N(2) fixation ability of the nitrogenase complex, which is inactivated in the presence of CO. This Rhodopseudomonas palustris (strain BisA53) protein is N(2)-fixation sustaining protein CowN.